Here is a 696-residue protein sequence, read N- to C-terminus: HIPL2 protein (696 aa).

Residues M1–S24 form the signal peptide. N-linked (GlcNAc...) asparagine glycosylation is found at N38, N69, N74, N108, N124, N148, N175, N339, N431, N513, N519, N528, N581, and N651. The GPI-anchor amidated serine moiety is linked to residue S672. A propeptide spans S673–D696 (removed in mature form).

The protein belongs to the PQQ oxidoreductase GdhB family. Pyrroloquinoline quinone is required as a cofactor.

Its subcellular location is the cell membrane. The chain is HIPL2 protein (HIPL2) from Arabidopsis thaliana (Mouse-ear cress).